Reading from the N-terminus, the 320-residue chain is Nuclease (320 aa).

Catalysis depends on His155, which acts as the Proton acceptor. Asn187 contributes to the Mg(2+) binding site. The N-linked (GlcNAc...) asparagine glycan is linked to Asn204. An intrachain disulfide couples Cys312 to Cys317.

Belongs to the DNA/RNA non-specific endonuclease family. In terms of assembly, homodimer; as a result of non-covalent interactions and not through the disulfide linkages between the two monomers. Requires Mg(2+) as cofactor. It depends on Mn(2+) as a cofactor. In terms of processing, glycosylated.

It localises to the secreted. This enzyme has both RNase and DNase activity. The polypeptide is Nuclease (Syncephalastrum racemosum (Filamentous fungus)).